The chain runs to 344 residues: MKKWLIIAVSLAIAIVLFMYTKGEAKAAGMTVGYTTGDTASYNSLTKYHTYMNAIATDTFAFEKNGQIIGDAPTKQLTYAKKKKIKTWAVISNYNDAIYDFDGDLASRVMSNKTAKKRFTDQLITLAKKHSYYGINIDFEAVNPEDRAAYSNFIQYVSQALNKKHIKTMVSVPAKSADDKNDDWSWPYDYAKIGKYADFVQVMTYDEHGIWGEPGSVASTNWIKSSLQFSVKKIKANKVIMGIPAYGYDWDVKDGSTSTIREWNELKSLIKKQKAKPAFNKKSGSMTFSYVDKKKHKHVVWYENEKTVQTKSHLAKQYKIAGVSVYALGNESESFWKAIRKGTK.

A signal peptide spans 1-27 (MKKWLIIAVSLAIAIVLFMYTKGEAKA). One can recognise a GH18 domain in the interval 29-344 (GMTVGYTTGD…FWKAIRKGTK (316 aa)). Residue glutamate 140 is the Proton donor of the active site.

The protein belongs to the glycosyl hydrolase 18 family.

This is an uncharacterized protein from Bacillus subtilis (strain 168).